We begin with the raw amino-acid sequence, 52 residues long: uncharacterized protein (52 aa).

Transmembrane regions (helical) follow at residues 4–24 (IIIP…ISLE) and 25–45 (MSIV…FLFV).

The protein localises to the cell membrane. This is an uncharacterized protein from Bacillus subtilis (strain 168).